Here is a 426-residue protein sequence, read N- to C-terminus: Ornithine aminotransferase (426 aa).

At Lys291 the chain carries N6-(pyridoxal phosphate)lysine.

It belongs to the class-III pyridoxal-phosphate-dependent aminotransferase family. It depends on pyridoxal 5'-phosphate as a cofactor.

It carries out the reaction a 2-oxocarboxylate + L-ornithine = L-glutamate 5-semialdehyde + an L-alpha-amino acid. Its pathway is amino-acid biosynthesis; L-proline biosynthesis; L-glutamate 5-semialdehyde from L-ornithine: step 1/1. In Vigna aconitifolia (Moth bean), this protein is Ornithine aminotransferase.